The primary structure comprises 1067 residues: Cadmium/zinc-transporting ATPase HMA2 (1067 aa).

An HMA domain is found at 9 to 75 (QKSYFDVLGI…ALNQARLEAS (67 aa)). Helical transmembrane passes span 94-114 (YVLL…WHPL), 117-137 (FALV…IAAI), 140-160 (LTLD…ALKD), 162-182 (SEAG…TRAS), 313-333 (YTPA…IAKA), 342-362 (LALV…TPIA), 649-669 (IIVN…LAFA), and 673-693 (LIWA…MYSM). Disordered stretches follow at residues 711–739 (HHGS…HHCS), 760–790 (HDHH…SHGH), and 960–996 (NDTH…GHHP). Over residues 724–735 (HGSHAKKNHGVS) the composition is skewed to basic residues. Basic and acidic residues-rich tracts occupy residues 760–774 (HDHH…EPAH) and 975–996 (SSDH…GHHP).

This sequence belongs to the cation transport ATPase (P-type) (TC 3.A.3) family. Type IB subfamily. In roots, localizes at the pericycle cells. In nodes, localizes in the phloem parenchyma and companion cells of both enlarged and diffuse vascular bundles.

It is found in the cell membrane. The catalysed reaction is Zn(2+)(in) + ATP + H2O = Zn(2+)(out) + ADP + phosphate + H(+). It catalyses the reaction Cd(2+)(in) + ATP + H2O = Cd(2+)(out) + ADP + phosphate + H(+). Zinc/cadmium transporter that plays an essential role in promoting translocation of zinc and cadmium from roots to shoots. May control cadmium loading into xylem. In roots, transports zinc and cadmium from the apoplast to the symplast to facilitate translocation via the phloem. In nodes, functions to load zinc and cadmium to the phloem for the preferential distribution to the upper nodes and panicles. The sequence is that of Cadmium/zinc-transporting ATPase HMA2 from Oryza sativa subsp. japonica (Rice).